A 319-amino-acid chain; its full sequence is 4-hydroxy-3-methylbut-2-enyl diphosphate reductase (319 aa).

Cys18 contacts [4Fe-4S] cluster. 2 residues coordinate (2E)-4-hydroxy-3-methylbut-2-enyl diphosphate: His47 and His81. Dimethylallyl diphosphate is bound by residues His47 and His81. His47 and His81 together coordinate isopentenyl diphosphate. Cys103 lines the [4Fe-4S] cluster pocket. His131 is a binding site for (2E)-4-hydroxy-3-methylbut-2-enyl diphosphate. His131 serves as a coordination point for dimethylallyl diphosphate. His131 serves as a coordination point for isopentenyl diphosphate. Glu133 functions as the Proton donor in the catalytic mechanism. Position 172 (Thr172) interacts with (2E)-4-hydroxy-3-methylbut-2-enyl diphosphate. Cys202 is a [4Fe-4S] cluster binding site. Residues Ser230, Ser231, Asn232, and Ser275 each contribute to the (2E)-4-hydroxy-3-methylbut-2-enyl diphosphate site. Dimethylallyl diphosphate-binding residues include Ser230, Ser231, Asn232, and Ser275. Isopentenyl diphosphate contacts are provided by Ser230, Ser231, Asn232, and Ser275.

Belongs to the IspH family. [4Fe-4S] cluster serves as cofactor.

It catalyses the reaction isopentenyl diphosphate + 2 oxidized [2Fe-2S]-[ferredoxin] + H2O = (2E)-4-hydroxy-3-methylbut-2-enyl diphosphate + 2 reduced [2Fe-2S]-[ferredoxin] + 2 H(+). The catalysed reaction is dimethylallyl diphosphate + 2 oxidized [2Fe-2S]-[ferredoxin] + H2O = (2E)-4-hydroxy-3-methylbut-2-enyl diphosphate + 2 reduced [2Fe-2S]-[ferredoxin] + 2 H(+). It participates in isoprenoid biosynthesis; dimethylallyl diphosphate biosynthesis; dimethylallyl diphosphate from (2E)-4-hydroxy-3-methylbutenyl diphosphate: step 1/1. The protein operates within isoprenoid biosynthesis; isopentenyl diphosphate biosynthesis via DXP pathway; isopentenyl diphosphate from 1-deoxy-D-xylulose 5-phosphate: step 6/6. Catalyzes the conversion of 1-hydroxy-2-methyl-2-(E)-butenyl 4-diphosphate (HMBPP) into a mixture of isopentenyl diphosphate (IPP) and dimethylallyl diphosphate (DMAPP). Acts in the terminal step of the DOXP/MEP pathway for isoprenoid precursor biosynthesis. This is 4-hydroxy-3-methylbut-2-enyl diphosphate reductase from Methylocella silvestris (strain DSM 15510 / CIP 108128 / LMG 27833 / NCIMB 13906 / BL2).